Consider the following 580-residue polypeptide: 2-succinyl-5-enolpyruvyl-6-hydroxy-3-cyclohexene-1-carboxylate synthase (580 aa).

It belongs to the TPP enzyme family. MenD subfamily. Homodimer. Mg(2+) is required as a cofactor. It depends on Mn(2+) as a cofactor. The cofactor is thiamine diphosphate.

It catalyses the reaction isochorismate + 2-oxoglutarate + H(+) = 5-enolpyruvoyl-6-hydroxy-2-succinyl-cyclohex-3-ene-1-carboxylate + CO2. The protein operates within quinol/quinone metabolism; 1,4-dihydroxy-2-naphthoate biosynthesis; 1,4-dihydroxy-2-naphthoate from chorismate: step 2/7. It functions in the pathway quinol/quinone metabolism; menaquinone biosynthesis. In terms of biological role, catalyzes the thiamine diphosphate-dependent decarboxylation of 2-oxoglutarate and the subsequent addition of the resulting succinic semialdehyde-thiamine pyrophosphate anion to isochorismate to yield 2-succinyl-5-enolpyruvyl-6-hydroxy-3-cyclohexene-1-carboxylate (SEPHCHC). The polypeptide is 2-succinyl-5-enolpyruvyl-6-hydroxy-3-cyclohexene-1-carboxylate synthase (Listeria monocytogenes serovar 1/2a (strain ATCC BAA-679 / EGD-e)).